Consider the following 90-residue polypeptide: Molybdopterin synthase sulfur carrier subunit (90 aa).

Position 90 is a 1-thioglycine; alternate (Gly-90). Gly-90 is modified (glycyl adenylate; alternate).

Belongs to the MoaD family. MOCS2A subfamily. As to quaternary structure, heterotetramer; composed of 2 small (Mocs2A) and 2 large (Mocs2B) subunits. In terms of processing, C-terminal thiocarboxylation occurs in 2 steps, it is first acyl-adenylated (-COAMP) via the hesA/moeB/thiF part of MOCS3, then thiocarboxylated (-COSH) via the rhodanese domain of MOCS3.

It is found in the cytoplasm. Its pathway is cofactor biosynthesis; molybdopterin biosynthesis. Its function is as follows. Acts as a sulfur carrier required for molybdopterin biosynthesis. Component of the molybdopterin synthase complex that catalyzes the conversion of precursor Z into molybdopterin by mediating the incorporation of 2 sulfur atoms into precursor Z to generate a dithiolene group. In the complex, serves as sulfur donor by being thiocarboxylated (-COSH) at its C-terminus by MOCS3. After interaction with Mocs2B, the sulfur is then transferred to precursor Z to form molybdopterin. This chain is Molybdopterin synthase sulfur carrier subunit, found in Drosophila sechellia (Fruit fly).